Consider the following 366-residue polypeptide: Ribosomal RNA large subunit methyltransferase M (366 aa).

S-adenosyl-L-methionine is bound by residues serine 188, 221–224, aspartate 240, aspartate 260, and aspartate 277; that span reads CPGG. Lysine 306 functions as the Proton acceptor in the catalytic mechanism.

This sequence belongs to the class I-like SAM-binding methyltransferase superfamily. RNA methyltransferase RlmE family. RlmM subfamily. Monomer.

Its subcellular location is the cytoplasm. The enzyme catalyses cytidine(2498) in 23S rRNA + S-adenosyl-L-methionine = 2'-O-methylcytidine(2498) in 23S rRNA + S-adenosyl-L-homocysteine + H(+). Its function is as follows. Catalyzes the 2'-O-methylation at nucleotide C2498 in 23S rRNA. This Klebsiella pneumoniae (strain 342) protein is Ribosomal RNA large subunit methyltransferase M.